Consider the following 282-residue polypeptide: MSNKIIKLGSIEIANDKPFVLFGGMNVLESRDLAMSIAETYAEVTQKLGIPYVFKASFDKANRSSVNSYRGPGMEEGLKIFEEIKKTFNLPLITDVHETYQCAPVAEVVDIIQLPAFLARQTDLVVAMAKTGAIINVKKPQFLAPHEMRHIITKFNEAGNDEIILCERGSCFGYNNLVVDMLGMDEMKQSGYPVIFDATHALQRPGGRADSAGGRRAQATELARSGMALGLAGLFIEAHPDPDNAKCDGPCALPLHQLENYLKQMKAIDDLVKSFEPIDTSK.

This sequence belongs to the KdsA family.

It is found in the cytoplasm. The catalysed reaction is D-arabinose 5-phosphate + phosphoenolpyruvate + H2O = 3-deoxy-alpha-D-manno-2-octulosonate-8-phosphate + phosphate. It participates in carbohydrate biosynthesis; 3-deoxy-D-manno-octulosonate biosynthesis; 3-deoxy-D-manno-octulosonate from D-ribulose 5-phosphate: step 2/3. It functions in the pathway bacterial outer membrane biogenesis; lipopolysaccharide biosynthesis. In Shewanella oneidensis (strain ATCC 700550 / JCM 31522 / CIP 106686 / LMG 19005 / NCIMB 14063 / MR-1), this protein is 2-dehydro-3-deoxyphosphooctonate aldolase.